A 61-amino-acid chain; its full sequence is Tryptophyllin-T1 (61 aa).

The first 22 residues, 1–22 (MDFLKKSLFLVLFLGLVSISLC), serve as a signal peptide directing secretion. A propeptide spanning residues 23-53 (DEEKRQDDDEASEREEKKEIHEEGNQEERRD) is cleaved from the precursor. Residues 25-61 (EKRQDDDEASEREEKKEIHEEGNQEERRDRPPSWIPK) are disordered. Residues 36–55 (REEKKEIHEEGNQEERRDRP) are compositionally biased toward basic and acidic residues. Residue P56 is modified to 4-hydroxyproline; partial.

Belongs to the frog skin active peptide (FSAP) family. Tryptophillin subfamily. As to expression, expressed by the skin glands.

The protein resides in the secreted. This is Tryptophyllin-T1 from Pithecopus azureus (Orange-legged monkey tree frog).